A 219-amino-acid polypeptide reads, in one-letter code: Ran-binding protein 1 homolog c (219 aa).

A compositionally biased stretch (basic and acidic residues) spans 1–11 (MASTEPERENR). Disordered stretches follow at residues 1 to 30 (MASTEPERENREDETEVNEDEDTGAQVAPI) and 160 to 219 (QVGK…EAST). Over residues 12–23 (EDETEVNEDEDT) the composition is skewed to acidic residues. The RanBD1 domain occupies 26 to 161 (QVAPIVRLEE…FTEIAESQQV (136 aa)). The segment covering 185-219 (SEEKAKEAEEKEPAKEDKETKKEKVEEEKKTEAST) has biased composition (basic and acidic residues).

Its subcellular location is the nucleus. It localises to the nuclear pore complex. This Arabidopsis thaliana (Mouse-ear cress) protein is Ran-binding protein 1 homolog c (RANBP1C).